The chain runs to 268 residues: Indole-3-glycerol phosphate synthase (268 aa).

Belongs to the TrpC family.

The catalysed reaction is 1-(2-carboxyphenylamino)-1-deoxy-D-ribulose 5-phosphate + H(+) = (1S,2R)-1-C-(indol-3-yl)glycerol 3-phosphate + CO2 + H2O. The protein operates within amino-acid biosynthesis; L-tryptophan biosynthesis; L-tryptophan from chorismate: step 4/5. The chain is Indole-3-glycerol phosphate synthase from Acinetobacter baumannii (strain AB0057).